The chain runs to 305 residues: Glycine--tRNA ligase alpha subunit (305 aa).

It belongs to the class-II aminoacyl-tRNA synthetase family. Tetramer of two alpha and two beta subunits.

It localises to the cytoplasm. It carries out the reaction tRNA(Gly) + glycine + ATP = glycyl-tRNA(Gly) + AMP + diphosphate. This is Glycine--tRNA ligase alpha subunit from Vibrio parahaemolyticus serotype O3:K6 (strain RIMD 2210633).